The sequence spans 199 residues: Phycocyanobilin lyase CpcT (199 aa).

Belongs to the CpcT/CpeT biliprotein lyase family.

In terms of biological role, catalyzes the site-selective attachment of phycocyanobilin (PCB) to 'Cys-154' of C-phycocyanin subunit beta (CpcB) and to 'Cys-153' of phycoerythrocyanin subunit beta (PecB). Does not have chromophore lyase activity for ApcA1, ApcA2, ApcB, ApcD, ApcF or PecA. This is Phycocyanobilin lyase CpcT (cpcT1) from Nostoc sp. (strain PCC 7120 / SAG 25.82 / UTEX 2576).